The primary structure comprises 96 residues: Putative septation protein SpoVG (96 aa).

It belongs to the SpoVG family.

In terms of biological role, could be involved in septation. In Phytoplasma australiense, this protein is Putative septation protein SpoVG.